The following is a 327-amino-acid chain: GMP reductase (327 aa).

Catalysis depends on cysteine 176, which acts as the Thioimidate intermediate. 205–228 (IIADGGIRTHGDIAKSIRFGATMV) serves as a coordination point for NADP(+).

The protein belongs to the IMPDH/GMPR family. GuaC type 2 subfamily.

The enzyme catalyses IMP + NH4(+) + NADP(+) = GMP + NADPH + 2 H(+). Catalyzes the irreversible NADPH-dependent deamination of GMP to IMP. It functions in the conversion of nucleobase, nucleoside and nucleotide derivatives of G to A nucleotides, and in maintaining the intracellular balance of A and G nucleotides. This is GMP reductase from Streptococcus equi subsp. zooepidemicus (strain H70).